The sequence spans 435 residues: Enolase (435 aa).

(2R)-2-phosphoglycerate is bound at residue Gln-163. Glu-205 acts as the Proton donor in catalysis. The Mg(2+) site is built by Asp-243, Glu-292, and Asp-319. Positions 344, 373, 374, and 395 each coordinate (2R)-2-phosphoglycerate. Catalysis depends on Lys-344, which acts as the Proton acceptor.

It belongs to the enolase family. The cofactor is Mg(2+).

It localises to the cytoplasm. The protein resides in the secreted. Its subcellular location is the cell surface. The catalysed reaction is (2R)-2-phosphoglycerate = phosphoenolpyruvate + H2O. The protein operates within carbohydrate degradation; glycolysis; pyruvate from D-glyceraldehyde 3-phosphate: step 4/5. In terms of biological role, catalyzes the reversible conversion of 2-phosphoglycerate (2-PG) into phosphoenolpyruvate (PEP). It is essential for the degradation of carbohydrates via glycolysis. The polypeptide is Enolase (Streptococcus uberis (strain ATCC BAA-854 / 0140J)).